A 351-amino-acid polypeptide reads, in one-letter code: MRITNQDKKQGLIEVVPETIDDLWHLSHIVEVNDYVSTLTARRIQDNNSGKTRADRGVKKKFFLGIRVEKINFHKYTGMLRFTGIIESGPEDLIPLGSHHTINVQLNNSIRIKKIWNKWSLERLNQAIEASNRANEIIVAIEDNTTELGIIKQYGIDYIGPIIGDISGKQNIEKNRAQKVNEYYEDITKTLTQQKDIDKLIIIGPGFTKNGYYNYLEENYPKLAKKVILESTGAGGHAGIQEVLKNGLIESLSKDAKIAKEAALVNKLLEQIGKSSNTVTYGKKQVITASNMGAVEKLLVLEDLVRDKNIQNIMNTVENMGGVVTIISSQHDAGQQLKALGSLAAFLRYPI.

Belongs to the eukaryotic release factor 1 family. Pelota subfamily. As to quaternary structure, monomer. A divalent metal cation serves as cofactor.

The protein resides in the cytoplasm. Its function is as follows. May function in recognizing stalled ribosomes, interact with stem-loop structures in stalled mRNA molecules, and effect endonucleolytic cleavage of the mRNA. May play a role in the release non-functional ribosomes and degradation of damaged mRNAs. Has endoribonuclease activity. This Methanosphaera stadtmanae (strain ATCC 43021 / DSM 3091 / JCM 11832 / MCB-3) protein is Protein pelota homolog.